An 884-amino-acid chain; its full sequence is DNA mismatch repair protein MutS (884 aa).

643-650 (GPNMGGKS) is an ATP binding site.

It belongs to the DNA mismatch repair MutS family.

Its function is as follows. This protein is involved in the repair of mismatches in DNA. It is possible that it carries out the mismatch recognition step. This protein has a weak ATPase activity. The sequence is that of DNA mismatch repair protein MutS from Methylobacillus flagellatus (strain ATCC 51484 / DSM 6875 / VKM B-1610 / KT).